Reading from the N-terminus, the 363-residue chain is Flagellar P-ring protein (363 aa).

The first 20 residues, 1 to 20 (MKKLTLVLFGMLFLASSAHA), serve as a signal peptide directing secretion.

Belongs to the FlgI family. In terms of assembly, the basal body constitutes a major portion of the flagellar organelle and consists of four rings (L,P,S, and M) mounted on a central rod.

The protein localises to the periplasm. The protein resides in the bacterial flagellum basal body. Functionally, assembles around the rod to form the L-ring and probably protects the motor/basal body from shearing forces during rotation. The sequence is that of Flagellar P-ring protein from Vibrio atlanticus (strain LGP32) (Vibrio splendidus (strain Mel32)).